A 544-amino-acid polypeptide reads, in one-letter code: Secreted aspartic protease 9 (544 aa).

Positions 1-17 (MRLNSVALLSLVATALA) are cleaved as a signal peptide. Positions 31-50 (GESKDDLSPEDDSNPRFVKR) are disordered. A Peptidase A1 domain is found at 65-479 (YMATLKIGSN…DLDDYEVSLA (415 aa)). Pepstatin A is bound at residue 83–85 (DTG). A disulfide bridge connects residues C98 and C195. T167 is an active-site residue. N212, N240, and N252 each carry an N-linked (GlcNAc...) asparagine glycan. The active site involves D371. Residue 371 to 375 (DTGST) coordinates pepstatin A. A disulfide bridge links C406 with C441. Residues N422 and N499 are each glycosylated (N-linked (GlcNAc...) asparagine). The disordered stretch occupies residues 500-520 (SSGSGTTSSSGTSTSTSTRHS).

It belongs to the peptidase A1 family. As to quaternary structure, monomer. Post-translationally, the GPI-anchor is attached to the protein in the endoplasmic reticulum and serves to target the protein to the cell surface. There, the glucosamine-inositol phospholipid moiety is cleaved off and the GPI-modified mannoprotein is covalently attached via its lipidless GPI glycan remnant to the 1,6-beta-glucan of the outer cell wall layer.

It localises to the cell membrane. The protein localises to the secreted. The protein resides in the cell wall. It catalyses the reaction Preferential cleavage at the carboxyl of hydrophobic amino acids, but fails to cleave 15-Leu-|-Tyr-16, 16-Tyr-|-Leu-17 and 24-Phe-|-Phe-25 of insulin B chain. Activates trypsinogen, and degrades keratin.. In terms of biological role, secreted aspartic peptidases (SAPs) are a group of ten acidic hydrolases considered as key virulence factors. These enzymes supply the fungus with nutrient amino acids as well as are able to degrade the selected host's proteins involved in the immune defense. Moreover, acts toward human hemoglobin though limited proteolysis to generate a variety of antimicrobial hemocidins, enabling to compete with the other microorganisms of the same physiological niche using the microbicidal peptides generated from the host protein. Plays a key role in defense against host by cleaving histatin-5 (Hst 5), a peptide from human saliva that carries out fungicidal activity. The cleavage rate decreases in an order of SAP2 &gt; SAP9 &gt; SAP3 &gt; SAP7 &gt; SAP4 &gt; SAP1 &gt; SAP8. The first cleavage occurs between residues 'Lys-17' and 'His-18' of Hst 5, giving DSHAKRHHGYKRKFHEK and HHSHRGY peptides. Simultaneously, the DSHAKRHHGYKRK peptide is also formed. Further fragmentation by SAP9 results in FHEK product. This Candida albicans (Yeast) protein is Secreted aspartic protease 9.